The following is a 306-amino-acid chain: Mycothiol acetyltransferase (306 aa).

2 N-acetyltransferase domains span residues 5–162 (VWAE…TFVP) and 155–306 (VRLR…AQGS). Residues 82 to 84 (LIV) and 90 to 95 (RRGHGT) contribute to the acetyl-CoA site. 1D-myo-inositol 2-(L-cysteinylamino)-2-deoxy-alpha-D-glucopyranoside is bound by residues E182, K222, and E238. Acetyl-CoA is bound by residues 242-244 (VGV) and 249-255 (QGGGLGK). Residue Y276 coordinates 1D-myo-inositol 2-(L-cysteinylamino)-2-deoxy-alpha-D-glucopyranoside.

The protein belongs to the acetyltransferase family. MshD subfamily. As to quaternary structure, monomer.

The enzyme catalyses 1D-myo-inositol 2-(L-cysteinylamino)-2-deoxy-alpha-D-glucopyranoside + acetyl-CoA = mycothiol + CoA + H(+). In terms of biological role, catalyzes the transfer of acetyl from acetyl-CoA to desacetylmycothiol (Cys-GlcN-Ins) to form mycothiol. The polypeptide is Mycothiol acetyltransferase (Saccharomonospora viridis (strain ATCC 15386 / DSM 43017 / JCM 3036 / CCUG 5913 / NBRC 12207 / NCIMB 9602 / P101) (Thermoactinomyces viridis)).